Consider the following 199-residue polypeptide: Chaperone protein TorD (199 aa).

It belongs to the TorD/DmsD family. TorD subfamily.

The protein resides in the cytoplasm. Its function is as follows. Involved in the biogenesis of TorA. Acts on TorA before the insertion of the molybdenum cofactor and, as a result, probably favors a conformation of the apoenzyme that is competent for acquiring the cofactor. This is Chaperone protein TorD from Shigella boydii serotype 18 (strain CDC 3083-94 / BS512).